Reading from the N-terminus, the 697-residue chain is uncharacterized protein (697 aa).

Residues Cys-24 to Cys-51 constitute a DNA-binding region (zn(2)-C6 fungal-type). Residues Tyr-500–Leu-520 form a helical membrane-spanning segment.

It localises to the nucleus membrane. This is an uncharacterized protein from Schizosaccharomyces pombe (strain 972 / ATCC 24843) (Fission yeast).